We begin with the raw amino-acid sequence, 373 residues long: Asporin (373 aa).

The signal sequence occupies residues Met1–Ala15. Residues Lys16–Lys32 constitute a propeptide that is removed on maturation. O-linked (GalNAc...) serine glycosylation occurs at Ser48. Residues Phe59–Phe95 form the LRRNT domain. Cystine bridges form between Cys68/Cys74 and Cys72/Cys81. LRR repeat units follow at residues Asp96–Gly117, Ser120–Thr141, Lys144–Leu166, Ala167–Gly186, Ala189–Gly212, Thr235–Lys255, Glu259–Asn280, Arg283–Lys305, Tyr306–Pro327, Thr328–Tyr349, and Trp350–Lys373. Positions Pro159–Ile205 are interaction with TGFB1. N-linked (GlcNAc...) asparagine glycosylation occurs at Asn275. A disulfide bridge links Cys326 with Cys359.

Belongs to the small leucine-rich proteoglycan (SLRP) family. SLRP class I subfamily. As to quaternary structure, interacts with type I collagen. DCN can inhibit collagen binding. Interacts with TGFB1, TGFB2 and TGFB3. DCN, BGN, and FMOD inhibit binding to TGFB1. Interacts with BMP2. Interacts in vitro with type II collagen. As to expression, higher expression in heart, also detected in kidney, stomach, testes, and skin but only weakly in lung, skeletal muscle, small intestine, and thymus. Expressed specifically and predominantly in the periodontal ligament (PDL). During tooth development, strong expression is seen in the dental follicle, which is the progenitor tissue that forms cementum, alveolar bone, and the PDL. Expressed in the perichondria of the maxilla, mandible, vertebrae, and long bones. Predominantly expressed in the perichondrium/periosteum of long bones (at protein level).

The protein resides in the secreted. It localises to the extracellular space. Its subcellular location is the extracellular matrix. In terms of biological role, binds calcium and plays a role in osteoblast-driven collagen biomineralization activity. Critical regulator of TGF-beta in articular cartilage and plays an essential role in cartilage homeostasis and osteoarthritis (OA) pathogenesis. Negatively regulates chondrogenesis in the articular cartilage by blocking the TGF-beta/receptor interaction on the cell surface and inhibiting the canonical TGF-beta/Smad signal. Negatively regulates periodontal ligament (PDL) differentiation and mineralization to ensure that the PDL is not ossified and to maintain homeostasis of the tooth-supporting system. Inhibits BMP2-induced cytodifferentiation of PDL cells by preventing its binding to BMPR1B/BMP type-1B receptor, resulting in inhibition of BMP-dependent activation of SMAD proteins. Inhibits the interaction between TGFB1 and TGF-beta receptor type II in the presence of heparin/heparan sulfate in vitro. This Mus musculus (Mouse) protein is Asporin (Aspn).